A 197-amino-acid polypeptide reads, in one-letter code: Probable UbiX-like flavin prenyltransferase (197 aa).

FMN is bound by residues 9-11, Ser-36, 87-90, and Arg-122; these read GAT and SMKT.

This sequence belongs to the UbiX/PAD1 family. YclB subfamily. As to quaternary structure, homododecamer.

The enzyme catalyses dimethylallyl phosphate + FMNH2 = prenylated FMNH2 + phosphate. Its function is as follows. Flavin prenyltransferase that catalyzes the synthesis of the prenylated FMN cofactor (prenyl-FMN) for phenolic acid decarboxylase C. Involved in the decarboxylation and detoxification of phenolic derivatives under both aerobic and anaerobic conditions. This Escherichia coli protein is Probable UbiX-like flavin prenyltransferase (ecdB).